Here is a 291-residue protein sequence, read N- to C-terminus: Deaminated glutathione amidase (291 aa).

In terms of domain architecture, CN hydrolase spans Lys-13–Leu-268. Glu-52 functions as the Proton acceptor in the catalytic mechanism. The active-site Proton donor is the Lys-130. The active-site Nucleophile is Cys-172.

This sequence belongs to the carbon-nitrogen hydrolase superfamily. NIT1/NIT2 family.

The enzyme catalyses N-(4-oxoglutaryl)-L-cysteinylglycine + H2O = L-cysteinylglycine + 2-oxoglutarate. Its function is as follows. Catalyzes the hydrolysis of the amide bond in N-(4-oxoglutarate)-L-cysteinylglycine (deaminated glutathione), a metabolite repair reaction to dispose of the harmful deaminated glutathione. This is Deaminated glutathione amidase (nit1-1) from Dictyostelium discoideum (Social amoeba).